The following is a 142-amino-acid chain: Protein-export protein SecB (142 aa).

The protein belongs to the SecB family. As to quaternary structure, homotetramer, a dimer of dimers. One homotetramer interacts with 1 SecA dimer.

The protein resides in the cytoplasm. Functionally, one of the proteins required for the normal export of preproteins out of the cell cytoplasm. It is a molecular chaperone that binds to a subset of precursor proteins, maintaining them in a translocation-competent state. It also specifically binds to its receptor SecA. This Buchnera aphidicola subsp. Acyrthosiphon pisum (strain 5A) protein is Protein-export protein SecB.